The sequence spans 222 residues: N-acetyltransferase 8B (222 aa).

At 1–42 (MVSYHICEYQDSDYKSVVDVFTKGAEEYIPSTFRHLLLLPRT) the chain is on the cytoplasmic side. Residues 43–67 (LLLLLGVSLALVLVSGSWLLAVVCI) traverse the membrane as a helical; Signal-anchor for type II membrane protein segment. Residues 62–217 (LAVVCIFFLL…VGIRFVQLNY (156 aa)) enclose the N-acetyltransferase domain. At 68-222 (FFLLPFLWFL…VQLNYSFPSA (155 aa)) the chain is on the lumenal side. K99 is subject to N6-acetyllysine.

The protein belongs to the NAT8 family. Acetylation on Lys-99 modulates enzymatic activity.

The protein localises to the endoplasmic reticulum-Golgi intermediate compartment membrane. It is found in the endoplasmic reticulum membrane. It carries out the reaction L-lysyl-[protein] + acetyl-CoA = N(6)-acetyl-L-lysyl-[protein] + CoA + H(+). In terms of biological role, endoplasmic reticulum (ER)-membrane-bound lysine N-acetyltransferase catalyzing the N6-acetylation of lysine residues in the lumen of the ER in various proteins, including PROM1 and BACE1, using acetyl-CoA as acetyl donor. Thereby, may regulate apoptosis through the acetylation and the regulation of the expression of PROM1. Acetylates and stabilizes BACE1 immature protein, leading to increased steady-state levels in neurons. By acting on BACE1 expression, may regulate amyloid beta-peptide formation. N(6)-lysine acetylation in ER maintains protein homeostasis and regulates reticulophagy. In Rattus norvegicus (Rat), this protein is N-acetyltransferase 8B.